Here is a 318-residue protein sequence, read N- to C-terminus: Ribosome biogenesis protein RLP7 (318 aa).

Disordered stretches follow at residues 1 to 49 (MSQP…NRFV) and 101 to 121 (AGSK…DEED). The segment covering 19–40 (ADRTRLEKQELAKKRKEQEEKQ) has biased composition (basic and acidic residues). Residues 110–121 (ELQDVDEEDEED) show a composition bias toward acidic residues.

It belongs to the universal ribosomal protein uL30 family.

Its subcellular location is the nucleus. The protein resides in the nucleolus. Its function is as follows. Involved in the biogenesis of the 60S ribosomal subunit. May act as a specificity factor that binds precursor rRNAs and tethers the enzymes that carry out the early 5' to 3' exonucleolytic reactions that generate the mature rRNAs. This chain is Ribosome biogenesis protein RLP7 (RLP7), found in Kluyveromyces lactis (strain ATCC 8585 / CBS 2359 / DSM 70799 / NBRC 1267 / NRRL Y-1140 / WM37) (Yeast).